The primary structure comprises 337 residues: tRNA N6-adenosine threonylcarbamoyltransferase (337 aa).

Fe cation contacts are provided by H111 and H115. Residues 134 to 138 (LVSGG), D167, G180, and N272 contribute to the substrate site. A Fe cation-binding site is contributed by D300.

The protein belongs to the KAE1 / TsaD family. Fe(2+) serves as cofactor.

The protein resides in the cytoplasm. The catalysed reaction is L-threonylcarbamoyladenylate + adenosine(37) in tRNA = N(6)-L-threonylcarbamoyladenosine(37) in tRNA + AMP + H(+). In terms of biological role, required for the formation of a threonylcarbamoyl group on adenosine at position 37 (t(6)A37) in tRNAs that read codons beginning with adenine. Is involved in the transfer of the threonylcarbamoyl moiety of threonylcarbamoyl-AMP (TC-AMP) to the N6 group of A37, together with TsaE and TsaB. TsaD likely plays a direct catalytic role in this reaction. This Salmonella typhi protein is tRNA N6-adenosine threonylcarbamoyltransferase.